The primary structure comprises 339 residues: Alpha-ketoglutarate-dependent dioxygenase btcD (339 aa).

Histidine 96 serves as a coordination point for substrate. The Fe cation site is built by histidine 140 and aspartate 142. Position 173 (threonine 173) interacts with 2-oxoglutarate. The segment at 207-230 is disordered; it reads DGSDPKFQVPRGSPANVGTNLRPT. Residue histidine 302 participates in Fe cation binding. 2-oxoglutarate is bound by residues arginine 314 and arginine 318. Arginine 318 contacts substrate.

It belongs to the TfdA dioxygenase family. The cofactor is Fe(2+).

It functions in the pathway secondary metabolite biosynthesis; terpenoid biosynthesis. Functionally, alpha-ketoglutarate-dependent dioxygenase; part of the gene cluster that mediates the biosynthesis of betaestacins. The bifunctional terpene synthase btcA converts isopentenyl diphosphate (IPP) and dimethylallyl diphosphate (DMAPP) into the sesterterpene betaestacin I. The C-terminal prenyltransferase (PT) domain of btcA catalyzes formation of GFPP, whereas the N-terminal terpene cyclase (TC) domain catalyzes the cyclization of GFPP into betaestacin I. The cytochrome P450 monooxygenase btcB is then responsible for the six-step oxidation of betaestacin I to yield betaestacin II. The roles of the cytochrome P450 monooxygenase btcC and the alpha-ketoglutarate-dependent dioxygenase btcD have not been identified yet. The protein is Alpha-ketoglutarate-dependent dioxygenase btcD of Neocamarosporium betae (Beet black rot fungus).